Here is a 114-residue protein sequence, read N- to C-terminus: uncharacterized protein (114 aa).

3 helical membrane-spanning segments follow: residues 21-41, 65-85, and 93-113; these read LASS…VCLF, GCFS…SALI, and LSVF…ILTD.

The protein resides in the membrane. This is an uncharacterized protein from Saccharomyces cerevisiae (strain ATCC 204508 / S288c) (Baker's yeast).